Reading from the N-terminus, the 305-residue chain is Probable xyloglucan endotransglucosylase/hydrolase protein 21 (305 aa).

A signal peptide spans 1–25 (MVSSTLLVMSISLFLGLSILLVVHG). One can recognise a GH16 domain in the interval 26–216 (KDFNQDIDIT…WSQGPFVASF (191 aa)). N-linked (GlcNAc...) asparagine glycosylation occurs at Asn-46. The active-site Nucleophile is Glu-102. Glu-106 acts as the Proton donor in catalysis. Glu-106 is a xyloglucan binding site. N-linked (GlcNAc...) asparagine glycosylation is present at Asn-110. Residues 119-121 (HTN) and 129-131 (DRE) each bind xyloglucan. Residue Asn-146 is glycosylated (N-linked (GlcNAc...) asparagine). Xyloglucan-binding positions include 195–196 (DW) and Gly-200. N-linked (GlcNAc...) asparagine glycosylation is found at Asn-206 and Asn-231. 2 disulfide bridges follow: Cys-225–Cys-239 and Cys-282–Cys-296. Over residues 236–253 (TSPCSPGDSTSSSSSSTS) the composition is skewed to low complexity. The tract at residues 236–258 (TSPCSPGDSTSSSSSSTSEWFSQ) is disordered. Position 287 (Arg-287) interacts with xyloglucan.

It belongs to the glycosyl hydrolase 16 family. XTH group 2 subfamily. Contains at least one intrachain disulfide bond essential for its enzymatic activity. As to expression, predominantly expressed in green siliques.

The protein localises to the secreted. Its subcellular location is the cell wall. It localises to the extracellular space. The protein resides in the apoplast. The enzyme catalyses breaks a beta-(1-&gt;4) bond in the backbone of a xyloglucan and transfers the xyloglucanyl segment on to O-4 of the non-reducing terminal glucose residue of an acceptor, which can be a xyloglucan or an oligosaccharide of xyloglucan.. Functionally, catalyzes xyloglucan endohydrolysis (XEH) and/or endotransglycosylation (XET). Cleaves and religates xyloglucan polymers, an essential constituent of the primary cell wall, and thereby participates in cell wall construction of growing tissues. This chain is Probable xyloglucan endotransglucosylase/hydrolase protein 21 (XTH21), found in Arabidopsis thaliana (Mouse-ear cress).